We begin with the raw amino-acid sequence, 32 residues long: Chlorophyll a-b binding protein 2, chloroplastic (32 aa).

Residues E19 and H22 each contribute to the chlorophyll a site. Residue R24 participates in chlorophyll b binding.

This sequence belongs to the light-harvesting chlorophyll a/b-binding (LHC) protein family. In terms of assembly, the LHC complex consists of chlorophyll a-b binding proteins. It depends on Binds at least 14 chlorophylls (8 Chl-a and 6 Chl-b) and carotenoids such as lutein and neoxanthin. as a cofactor. In terms of processing, photoregulated by reversible phosphorylation of its threonine residues.

The protein resides in the plastid. The protein localises to the chloroplast thylakoid membrane. In terms of biological role, the light-harvesting complex (LHC) functions as a light receptor, it captures and delivers excitation energy to photosystems with which it is closely associated. The sequence is that of Chlorophyll a-b binding protein 2, chloroplastic from Populus euphratica (Euphrates poplar).